The sequence spans 100 residues: Urease subunit gamma (100 aa).

This sequence belongs to the urease gamma subunit family. As to quaternary structure, heterotrimer of UreA (gamma), UreB (beta) and UreC (alpha) subunits. Three heterotrimers associate to form the active enzyme.

Its subcellular location is the cytoplasm. The enzyme catalyses urea + 2 H2O + H(+) = hydrogencarbonate + 2 NH4(+). It participates in nitrogen metabolism; urea degradation; CO(2) and NH(3) from urea (urease route): step 1/1. The sequence is that of Urease subunit gamma from Haemophilus influenzae (strain ATCC 51907 / DSM 11121 / KW20 / Rd).